The following is a 408-amino-acid chain: Homogentisate geranylgeranyltransferase (408 aa).

The transit peptide at 1–62 directs the protein to the chloroplast; it reads MQAVTAAAAA…TVMHKFSAIS (62 aa). The next 9 helical transmembrane spans lie at 122-142, 156-176, 194-214, 221-241, 248-268, 286-306, 329-349, 352-372, and 386-406; these read HTIF…MKSI, ALTA…LYDI, SVAT…SIGI, LMCA…EAPF, ALLA…LAFF, LVFA…FKDI, VYQL…LVGA, TNLF…LTLW, and VTSF…LIPF.

It belongs to the UbiA prenyltransferase family. In terms of tissue distribution, expressed in seeds.

The protein resides in the plastid. It localises to the chloroplast membrane. The catalysed reaction is homogentisate + (2E,6E,10E)-geranylgeranyl diphosphate + H(+) = 6-geranylgeranyl-2-methylbenzene-1,4-diol + CO2 + diphosphate. It participates in cofactor biosynthesis; tocopherol biosynthesis. Involved in the synthesis of tocotrienol (vitamin E). Catalyzes the condensation of homogentisate and geranylgeranyl diphosphate to form 2-methyl-6-geranylgeranylbenzoquinol. Possesses low activity with phytyl diphosphate as substrate. This Hordeum vulgare (Barley) protein is Homogentisate geranylgeranyltransferase.